We begin with the raw amino-acid sequence, 218 residues long: uncharacterized protein (218 aa).

The tract at residues 1–24 (MAAQPQAPSAGGRPRAGKAVKSVA) is disordered. An HTH tetR-type domain is found at 28–88 (KLSRESIVEG…AVRIRVIDDI (61 aa)). Positions 51–70 (TINALATQLGTKGPSLYNHV) form a DNA-binding region, H-T-H motif. A Phosphothreonine; by PknH modification is found at Thr57.

Post-translationally, phosphorylated on Thr-57 by PknH.

This is an uncharacterized protein from Mycobacterium tuberculosis (strain ATCC 25618 / H37Rv).